The sequence spans 210 residues: Scoloptoxin SSD976 (210 aa).

Positions 1-23 (MNILLSSTLFVLLMFQIIGSGMG) are cleaved as a signal peptide.

Post-translationally, contains 3 disulfide bonds. In terms of tissue distribution, expressed by the venom gland.

It localises to the secreted. Functionally, voltage-gated calcium channel inhibitor. The polypeptide is Scoloptoxin SSD976 (Scolopendra dehaani (Thai centipede)).